The chain runs to 455 residues: Bifunctional protein GlmU (455 aa).

Positions 1 to 230 (MVNKNAIILA…FDESMGVNDR (230 aa)) are pyrophosphorylase. UDP-N-acetyl-alpha-D-glucosamine is bound by residues 9-12 (LAAG), K23, Q73, 78-79 (GT), 101-103 (SGD), G140, E155, N170, and N228. Position 103 (D103) interacts with Mg(2+). Mg(2+) is bound at residue N228. Residues 231–251 (SALAKATKIMQKRINTQLMKD) are linker. The tract at residues 252 to 455 (GVTLVDPETA…KPGYAKKLPW (204 aa)) is N-acetyltransferase. R333 and K351 together coordinate UDP-N-acetyl-alpha-D-glucosamine. The active-site Proton acceptor is H363. The UDP-N-acetyl-alpha-D-glucosamine site is built by Y366 and N377. Residues 386 to 387 (NY), S405, A423, and R440 each bind acetyl-CoA.

The protein in the N-terminal section; belongs to the N-acetylglucosamine-1-phosphate uridyltransferase family. It in the C-terminal section; belongs to the transferase hexapeptide repeat family. In terms of assembly, homotrimer. Requires Mg(2+) as cofactor.

Its subcellular location is the cytoplasm. It catalyses the reaction alpha-D-glucosamine 1-phosphate + acetyl-CoA = N-acetyl-alpha-D-glucosamine 1-phosphate + CoA + H(+). The catalysed reaction is N-acetyl-alpha-D-glucosamine 1-phosphate + UTP + H(+) = UDP-N-acetyl-alpha-D-glucosamine + diphosphate. It participates in nucleotide-sugar biosynthesis; UDP-N-acetyl-alpha-D-glucosamine biosynthesis; N-acetyl-alpha-D-glucosamine 1-phosphate from alpha-D-glucosamine 6-phosphate (route II): step 2/2. Its pathway is nucleotide-sugar biosynthesis; UDP-N-acetyl-alpha-D-glucosamine biosynthesis; UDP-N-acetyl-alpha-D-glucosamine from N-acetyl-alpha-D-glucosamine 1-phosphate: step 1/1. The protein operates within bacterial outer membrane biogenesis; LPS lipid A biosynthesis. In terms of biological role, catalyzes the last two sequential reactions in the de novo biosynthetic pathway for UDP-N-acetylglucosamine (UDP-GlcNAc). The C-terminal domain catalyzes the transfer of acetyl group from acetyl coenzyme A to glucosamine-1-phosphate (GlcN-1-P) to produce N-acetylglucosamine-1-phosphate (GlcNAc-1-P), which is converted into UDP-GlcNAc by the transfer of uridine 5-monophosphate (from uridine 5-triphosphate), a reaction catalyzed by the N-terminal domain. The protein is Bifunctional protein GlmU of Limosilactobacillus fermentum (strain NBRC 3956 / LMG 18251) (Lactobacillus fermentum).